The primary structure comprises 218 residues: N-(5'-phosphoribosyl)anthranilate isomerase (218 aa).

Belongs to the TrpF family.

The enzyme catalyses N-(5-phospho-beta-D-ribosyl)anthranilate = 1-(2-carboxyphenylamino)-1-deoxy-D-ribulose 5-phosphate. Its pathway is amino-acid biosynthesis; L-tryptophan biosynthesis; L-tryptophan from chorismate: step 3/5. The sequence is that of N-(5'-phosphoribosyl)anthranilate isomerase from Bordetella pertussis (strain Tohama I / ATCC BAA-589 / NCTC 13251).